A 620-amino-acid polypeptide reads, in one-letter code: Glutathione-regulated potassium-efflux system protein KefC (620 aa).

The next 12 membrane-spanning stretches (helical) occupy residues 4–24 (HTLIQALIYLGSAALIVPIAV), 26–46 (LGLGSVLGYLIAGCIIGPWGL), 54–74 (SILHFAEIGVVLMLFIIGLEL), 90–110 (GALQMVICGGLLGLFCMLLGL), 114–134 (VAELIGMTLALSSTAIAMQAM), 149–169 (FAVLLFQDIAAIPLVAMIPLL), 178–198 (MGAFALSALKVAGALVLVVLL), 218–238 (VFSAVALFLVFGFGLLLEEVG), 270–290 (GLLLGLFFIGVGMSIDFGTLL), 294–314 (LRIVILLLGFLIIKIAMLWLI), 327–347 (WFAVLLGQGSEFAFVVFGAAQ), and 359–379 (SLTLAVALSMAATPILLVILN). An RCK N-terminal domain is found at 399–518 (QPRVIIAGFG…AGVEKPERET (120 aa)). The interval 597–620 (GWQGTEEGKHTGNMADEPETKPSS) is disordered.

This sequence belongs to the monovalent cation:proton antiporter 2 (CPA2) transporter (TC 2.A.37) family. KefC subfamily. As to quaternary structure, homodimer. Interacts with the regulatory subunit KefF.

The protein localises to the cell inner membrane. In terms of biological role, pore-forming subunit of a potassium efflux system that confers protection against electrophiles. Catalyzes K(+)/H(+) antiport. This Escherichia coli O6:K15:H31 (strain 536 / UPEC) protein is Glutathione-regulated potassium-efflux system protein KefC.